The following is a 776-amino-acid chain: Disintegrin and metalloproteinase domain-containing protein 28 (776 aa).

Positions 1 to 19 (MLQALLTVSLLLSPVPVSA) are cleaved as a signal peptide. The propeptide occupies 20–193 (IKELPGVKKY…IARPATRLVK (174 aa)). The Cysteine switch motif lies at 168–175 (STCGTDGV). A Zn(2+)-binding site is contributed by C170. Residues 194-666 (LNDGKVQKHE…CDDSSVVFYF (473 aa)) are Extracellular-facing. Residues 204–400 (KYIEYYLVLD…KLSNCLFNAP (197 aa)) form the Peptidase M12B domain. N-linked (GlcNAc...) asparagine glycans are attached at residues N268 and N275. Cystine bridges form between C315–C395, C355–C379, C357–C362, and C466–C486. Residue H340 participates in Zn(2+) binding. The active site involves E341. Zn(2+) is bound by residues H344 and H350. The N-linked (GlcNAc...) asparagine glycan is linked to N352. The Disintegrin domain occupies 408-494 (TPICGNQMVE…NCPDDRFRAN (87 aa)). N-linked (GlcNAc...) asparagine glycans are attached at residues N558, N603, and N629. In terms of domain architecture, EGF-like spans 626 to 658 (KSTNCSSKCKGHAVCDHELQCQCEEGWSPPDCD). 3 disulfides stabilise this stretch: C630-C640, C634-C646, and C648-C657. A helical transmembrane segment spans residues 667–687 (SIVVAVLFPVAVISLVVAIVI). Residues 688–776 (RQQSSREKQK…SSFLDSNPKA (89 aa)) are Cytoplasmic-facing. The segment covering 691-701 (SSREKQKKDQR) has biased composition (basic and acidic residues). Disordered stretches follow at residues 691-728 (SSRE…PQEM) and 746-776 (PASF…NPKA). Residues 709 to 718 (RPHKQKRKPQ) show a composition bias toward basic residues.

It depends on Zn(2+) as a cofactor. Post-translationally, pro-domain removal and maturation may be, at least in part, autocatalytic. As to expression, expressed at high levels in epididymis and at lower levels in lung.

The protein resides in the membrane. May play a role in the adhesive and proteolytic events that occur during lymphocyte emigration or may function in ectodomain shedding of lymphocyte surface target proteins, such as FASL and CD40L. May be involved in sperm maturation. This chain is Disintegrin and metalloproteinase domain-containing protein 28 (ADAM28), found in Macaca fascicularis (Crab-eating macaque).